Consider the following 197-residue polypeptide: Peptide deformylase (197 aa).

C106 and H148 together coordinate Fe cation. E149 is a catalytic residue. H152 contributes to the Fe cation binding site.

The protein belongs to the polypeptide deformylase family. Requires Fe(2+) as cofactor.

The catalysed reaction is N-terminal N-formyl-L-methionyl-[peptide] + H2O = N-terminal L-methionyl-[peptide] + formate. Its function is as follows. Removes the formyl group from the N-terminal Met of newly synthesized proteins. Requires at least a dipeptide for an efficient rate of reaction. N-terminal L-methionine is a prerequisite for activity but the enzyme has broad specificity at other positions. The polypeptide is Peptide deformylase (Mycobacterium tuberculosis (strain ATCC 25177 / H37Ra)).